A 363-amino-acid chain; its full sequence is tRNA(Met) cytidine acetate ligase (363 aa).

ATP is bound by residues 7–20 (IAEFNPFHNGHKYL), Gly96, Asn152, and Arg175.

Belongs to the TmcAL family.

The protein localises to the cytoplasm. The catalysed reaction is cytidine(34) in elongator tRNA(Met) + acetate + ATP = N(4)-acetylcytidine(34) in elongator tRNA(Met) + AMP + diphosphate. Functionally, catalyzes the formation of N(4)-acetylcytidine (ac(4)C) at the wobble position of elongator tRNA(Met), using acetate and ATP as substrates. First activates an acetate ion to form acetyladenylate (Ac-AMP) and then transfers the acetyl group to tRNA to form ac(4)C34. In Streptococcus gordonii (strain Challis / ATCC 35105 / BCRC 15272 / CH1 / DL1 / V288), this protein is tRNA(Met) cytidine acetate ligase.